The primary structure comprises 364 residues: Histidinol-phosphate aminotransferase 1 (364 aa).

Lys211 carries the N6-(pyridoxal phosphate)lysine modification.

This sequence belongs to the class-II pyridoxal-phosphate-dependent aminotransferase family. Histidinol-phosphate aminotransferase subfamily. Homodimer. Pyridoxal 5'-phosphate is required as a cofactor.

It carries out the reaction L-histidinol phosphate + 2-oxoglutarate = 3-(imidazol-4-yl)-2-oxopropyl phosphate + L-glutamate. It participates in amino-acid biosynthesis; L-histidine biosynthesis; L-histidine from 5-phospho-alpha-D-ribose 1-diphosphate: step 7/9. The protein is Histidinol-phosphate aminotransferase 1 of Legionella pneumophila (strain Paris).